We begin with the raw amino-acid sequence, 525 residues long: DEAD-box ATP-dependent RNA helicase CshA (525 aa).

The Q motif motif lies at 2 to 30 (TTFRELGLSDSLLQSVESMGFEEATPIQA). The 171-residue stretch at 33–203 (IPHALQGKDI…ERFMTEPQHI (171 aa)) folds into the Helicase ATP-binding domain. 46–53 (AQTGTGKT) contacts ATP. A DEAD box motif is present at residues 151–154 (DEAD). Residues 214 to 374 (NIQQFYLEVQ…RMDAPTLDEA (161 aa)) enclose the Helicase C-terminal domain. The tract at residues 428–525 (TTPIALTSEP…RKHHSRKPQA (98 aa)) is disordered. Basic and acidic residues predominate over residues 458–503 (DGNRNRSRDGRGGDGRNRDRNRDGRNRDGNRDRNRDGGNRGRRGEG). A compositionally biased stretch (basic residues) spans 515–525 (ERKHHSRKPQA).

The protein belongs to the DEAD box helicase family. CshA subfamily. As to quaternary structure, oligomerizes, may be a member of the RNA degradosome.

It localises to the cytoplasm. The enzyme catalyses ATP + H2O = ADP + phosphate + H(+). In terms of biological role, DEAD-box RNA helicase possibly involved in RNA degradation. Unwinds dsRNA in both 5'- and 3'-directions, has RNA-dependent ATPase activity. The chain is DEAD-box ATP-dependent RNA helicase CshA from Bacillus cereus (strain ATCC 10987 / NRS 248).